The primary structure comprises 62 residues: Large ribosomal subunit protein uL30 (62 aa).

Belongs to the universal ribosomal protein uL30 family. As to quaternary structure, part of the 50S ribosomal subunit.

This is Large ribosomal subunit protein uL30 from Hydrogenovibrio crunogenus (strain DSM 25203 / XCL-2) (Thiomicrospira crunogena).